We begin with the raw amino-acid sequence, 69 residues long: Putative membrane protein insertion efficiency factor (69 aa).

Belongs to the UPF0161 family.

It is found in the cell inner membrane. Its function is as follows. Could be involved in insertion of integral membrane proteins into the membrane. The polypeptide is Putative membrane protein insertion efficiency factor (Chromobacterium violaceum (strain ATCC 12472 / DSM 30191 / JCM 1249 / CCUG 213 / NBRC 12614 / NCIMB 9131 / NCTC 9757 / MK)).